A 147-amino-acid polypeptide reads, in one-letter code: Small ribosomal subunit protein uS12 (147 aa).

It belongs to the universal ribosomal protein uS12 family. In terms of assembly, part of the 30S ribosomal subunit.

Its function is as follows. With S4 and S5 plays an important role in translational accuracy. Located at the interface of the 30S and 50S subunits. The chain is Small ribosomal subunit protein uS12 from Methanococcus vannielii (strain ATCC 35089 / DSM 1224 / JCM 13029 / OCM 148 / SB).